The following is a 282-amino-acid chain: 4-hydroxy-3-methylbut-2-enyl diphosphate reductase (282 aa).

C14 contributes to the [4Fe-4S] cluster binding site. 2 residues coordinate (2E)-4-hydroxy-3-methylbut-2-enyl diphosphate: H43 and H78. The dimethylallyl diphosphate site is built by H43 and H78. The isopentenyl diphosphate site is built by H43 and H78. C100 contributes to the [4Fe-4S] cluster binding site. Residue H128 coordinates (2E)-4-hydroxy-3-methylbut-2-enyl diphosphate. Dimethylallyl diphosphate is bound at residue H128. H128 is a binding site for isopentenyl diphosphate. E130 functions as the Proton donor in the catalytic mechanism. T164 lines the (2E)-4-hydroxy-3-methylbut-2-enyl diphosphate pocket. C192 contributes to the [4Fe-4S] cluster binding site. (2E)-4-hydroxy-3-methylbut-2-enyl diphosphate-binding residues include S220, S221, N222, and S266. Dimethylallyl diphosphate is bound by residues S220, S221, N222, and S266. Isopentenyl diphosphate contacts are provided by S220, S221, N222, and S266.

This sequence belongs to the IspH family. [4Fe-4S] cluster serves as cofactor.

It catalyses the reaction isopentenyl diphosphate + 2 oxidized [2Fe-2S]-[ferredoxin] + H2O = (2E)-4-hydroxy-3-methylbut-2-enyl diphosphate + 2 reduced [2Fe-2S]-[ferredoxin] + 2 H(+). The catalysed reaction is dimethylallyl diphosphate + 2 oxidized [2Fe-2S]-[ferredoxin] + H2O = (2E)-4-hydroxy-3-methylbut-2-enyl diphosphate + 2 reduced [2Fe-2S]-[ferredoxin] + 2 H(+). The protein operates within isoprenoid biosynthesis; dimethylallyl diphosphate biosynthesis; dimethylallyl diphosphate from (2E)-4-hydroxy-3-methylbutenyl diphosphate: step 1/1. It participates in isoprenoid biosynthesis; isopentenyl diphosphate biosynthesis via DXP pathway; isopentenyl diphosphate from 1-deoxy-D-xylulose 5-phosphate: step 6/6. In terms of biological role, catalyzes the conversion of 1-hydroxy-2-methyl-2-(E)-butenyl 4-diphosphate (HMBPP) into a mixture of isopentenyl diphosphate (IPP) and dimethylallyl diphosphate (DMAPP). Acts in the terminal step of the DOXP/MEP pathway for isoprenoid precursor biosynthesis. This is 4-hydroxy-3-methylbut-2-enyl diphosphate reductase from Clostridium perfringens (strain SM101 / Type A).